Reading from the N-terminus, the 156-residue chain is MIALIQRVSQARVTVEGRTTGEIGAGLLALVCAERGDTEAQADRLLAKMLSYRVFSDADGKMNLPVQNMDGNGGAGGLLVVSQFTLAADTNSGTRPSFTPAASPEDGRRLYGYFVERARASHPDVQTGEFGAMMQVSLTNDGPVTFWLRVPPPGNA.

The short motif at 142–143 (GP) is the Gly-cisPro motif, important for rejection of L-amino acids element.

It belongs to the DTD family. As to quaternary structure, homodimer.

The protein localises to the cytoplasm. It carries out the reaction glycyl-tRNA(Ala) + H2O = tRNA(Ala) + glycine + H(+). The enzyme catalyses a D-aminoacyl-tRNA + H2O = a tRNA + a D-alpha-amino acid + H(+). An aminoacyl-tRNA editing enzyme that deacylates mischarged D-aminoacyl-tRNAs. Also deacylates mischarged glycyl-tRNA(Ala), protecting cells against glycine mischarging by AlaRS. Acts via tRNA-based rather than protein-based catalysis; rejects L-amino acids rather than detecting D-amino acids in the active site. By recycling D-aminoacyl-tRNA to D-amino acids and free tRNA molecules, this enzyme counteracts the toxicity associated with the formation of D-aminoacyl-tRNA entities in vivo and helps enforce protein L-homochirality. This chain is D-aminoacyl-tRNA deacylase, found in Cupriavidus pinatubonensis (strain JMP 134 / LMG 1197) (Cupriavidus necator (strain JMP 134)).